Here is a 418-residue protein sequence, read N- to C-terminus: Pyruvate kinase isozyme G, chloroplastic (418 aa).

Residues D14 and T15 each coordinate K(+). R21 lines the ATP pocket. E165 is a binding site for Mg(2+). Residues G188, D189, and T221 each contribute to the substrate site. A Mg(2+)-binding site is contributed by D189.

Belongs to the pyruvate kinase family. It depends on Mg(2+) as a cofactor. The cofactor is K(+). In terms of tissue distribution, expressed in developing and germinating endosperm and in roots.

It is found in the plastid. The protein localises to the chloroplast. It carries out the reaction pyruvate + ATP = phosphoenolpyruvate + ADP + H(+). Its pathway is carbohydrate degradation; glycolysis; pyruvate from D-glyceraldehyde 3-phosphate: step 5/5. The polypeptide is Pyruvate kinase isozyme G, chloroplastic (Ricinus communis (Castor bean)).